We begin with the raw amino-acid sequence, 184 residues long: UPF0398 protein BCAH820_1652 (184 aa).

It belongs to the UPF0398 family.

This is UPF0398 protein BCAH820_1652 from Bacillus cereus (strain AH820).